The sequence spans 233 residues: Leucyl/phenylalanyl-tRNA--protein transferase (233 aa).

This sequence belongs to the L/F-transferase family.

The protein localises to the cytoplasm. It catalyses the reaction N-terminal L-lysyl-[protein] + L-leucyl-tRNA(Leu) = N-terminal L-leucyl-L-lysyl-[protein] + tRNA(Leu) + H(+). The enzyme catalyses N-terminal L-arginyl-[protein] + L-leucyl-tRNA(Leu) = N-terminal L-leucyl-L-arginyl-[protein] + tRNA(Leu) + H(+). It carries out the reaction L-phenylalanyl-tRNA(Phe) + an N-terminal L-alpha-aminoacyl-[protein] = an N-terminal L-phenylalanyl-L-alpha-aminoacyl-[protein] + tRNA(Phe). In terms of biological role, functions in the N-end rule pathway of protein degradation where it conjugates Leu, Phe and, less efficiently, Met from aminoacyl-tRNAs to the N-termini of proteins containing an N-terminal arginine or lysine. This Anaeromyxobacter dehalogenans (strain 2CP-C) protein is Leucyl/phenylalanyl-tRNA--protein transferase.